A 286-amino-acid chain; its full sequence is Ribosomal RNA small subunit methyltransferase A (286 aa).

Residues asparagine 28, leucine 30, glycine 55, glutamate 77, aspartate 103, and asparagine 123 each coordinate S-adenosyl-L-methionine.

This sequence belongs to the class I-like SAM-binding methyltransferase superfamily. rRNA adenine N(6)-methyltransferase family. RsmA subfamily.

The protein resides in the cytoplasm. It catalyses the reaction adenosine(1518)/adenosine(1519) in 16S rRNA + 4 S-adenosyl-L-methionine = N(6)-dimethyladenosine(1518)/N(6)-dimethyladenosine(1519) in 16S rRNA + 4 S-adenosyl-L-homocysteine + 4 H(+). In terms of biological role, specifically dimethylates two adjacent adenosines (A1518 and A1519) in the loop of a conserved hairpin near the 3'-end of 16S rRNA in the 30S particle. May play a critical role in biogenesis of 30S subunits. This chain is Ribosomal RNA small subunit methyltransferase A, found in Bradyrhizobium sp. (strain ORS 278).